A 138-amino-acid chain; its full sequence is Ribulose bisphosphate carboxylase small subunit (138 aa).

This sequence belongs to the RuBisCO small chain family. Heterohexadecamer of 8 large and 8 small subunits.

The protein localises to the plastid. It is found in the chloroplast. Its function is as follows. RuBisCO catalyzes two reactions: the carboxylation of D-ribulose 1,5-bisphosphate, the primary event in carbon dioxide fixation, as well as the oxidative fragmentation of the pentose substrate in the photorespiration process. Both reactions occur simultaneously and in competition at the same active site. Although the small subunit is not catalytic it is essential for maximal activity. This is Ribulose bisphosphate carboxylase small subunit from Porphyridium aerugineum (Red microalga).